The sequence spans 475 residues: Glycogen synthase (475 aa).

Position 15 (lysine 15) interacts with ADP-alpha-D-glucose.

This sequence belongs to the glycosyltransferase 1 family. Bacterial/plant glycogen synthase subfamily.

The catalysed reaction is [(1-&gt;4)-alpha-D-glucosyl](n) + ADP-alpha-D-glucose = [(1-&gt;4)-alpha-D-glucosyl](n+1) + ADP + H(+). Its pathway is glycan biosynthesis; glycogen biosynthesis. Functionally, synthesizes alpha-1,4-glucan chains using ADP-glucose. The polypeptide is Glycogen synthase (Clostridium kluyveri (strain ATCC 8527 / DSM 555 / NBRC 12016 / NCIMB 10680 / K1)).